A 168-amino-acid chain; its full sequence is tRNA-splicing endonuclease (168 aa).

Residues Tyr-107, His-114, and Lys-145 contribute to the active site.

The protein belongs to the tRNA-intron endonuclease family. Archaeal short subfamily. As to quaternary structure, homotetramer; although the tetramer contains four active sites, only two participate in the cleavage. Therefore, it should be considered as a dimer of dimers.

It carries out the reaction pretRNA = a 3'-half-tRNA molecule with a 5'-OH end + a 5'-half-tRNA molecule with a 2',3'-cyclic phosphate end + an intron with a 2',3'-cyclic phosphate and a 5'-hydroxyl terminus.. Its function is as follows. Endonuclease that removes tRNA introns. Cleaves pre-tRNA at the 5'- and 3'-splice sites to release the intron. The products are an intron and two tRNA half-molecules bearing 2',3' cyclic phosphate and 5'-OH termini. Recognizes a pseudosymmetric substrate in which 2 bulged loops of 3 bases are separated by a stem of 4 bp. The sequence is that of tRNA-splicing endonuclease from Thermococcus kodakarensis (strain ATCC BAA-918 / JCM 12380 / KOD1) (Pyrococcus kodakaraensis (strain KOD1)).